The sequence spans 348 residues: Competence protein ComGA (348 aa).

145-152 is an ATP binding site; it reads GATGSGKT.

The protein belongs to the GSP E family.

The protein resides in the cell membrane. Its function is as follows. Required for uptake of DNA by competent cells. The protein is Competence protein ComGA (comGA) of Halalkalibacterium halodurans (strain ATCC BAA-125 / DSM 18197 / FERM 7344 / JCM 9153 / C-125) (Bacillus halodurans).